The following is a 263-amino-acid chain: 3-methyl-2-oxobutanoate hydroxymethyltransferase 2 (263 aa).

Mg(2+)-binding residues include aspartate 45 and aspartate 84. 3-methyl-2-oxobutanoate contacts are provided by residues 45–46, aspartate 84, and lysine 112; that span reads DS. Position 114 (glutamate 114) interacts with Mg(2+). Glutamate 181 serves as the catalytic Proton acceptor.

Belongs to the PanB family. Homodecamer; pentamer of dimers. Mg(2+) serves as cofactor.

The protein localises to the cytoplasm. The catalysed reaction is 3-methyl-2-oxobutanoate + (6R)-5,10-methylene-5,6,7,8-tetrahydrofolate + H2O = 2-dehydropantoate + (6S)-5,6,7,8-tetrahydrofolate. Its pathway is cofactor biosynthesis; (R)-pantothenate biosynthesis; (R)-pantoate from 3-methyl-2-oxobutanoate: step 1/2. In terms of biological role, catalyzes the reversible reaction in which hydroxymethyl group from 5,10-methylenetetrahydrofolate is transferred onto alpha-ketoisovalerate to form ketopantoate. This is 3-methyl-2-oxobutanoate hydroxymethyltransferase 2 from Aliivibrio fischeri (strain ATCC 700601 / ES114) (Vibrio fischeri).